The primary structure comprises 579 residues: Methionine--tRNA ligase (579 aa).

A 'HIGH' region motif is present at residues 14 to 24 (PYINGVKHLGN). Residues Cys146, Cys149, Cys159, and Cys162 each coordinate Zn(2+). The 'KMSKS' region signature appears at 346–350 (KFSTS). Thr349 serves as a coordination point for ATP.

The protein belongs to the class-I aminoacyl-tRNA synthetase family. MetG type 1 subfamily. As to quaternary structure, monomer. It depends on Zn(2+) as a cofactor.

The protein resides in the cytoplasm. It catalyses the reaction tRNA(Met) + L-methionine + ATP = L-methionyl-tRNA(Met) + AMP + diphosphate. Functionally, is required not only for elongation of protein synthesis but also for the initiation of all mRNA translation through initiator tRNA(fMet) aminoacylation. In Hyphomonas neptunium (strain ATCC 15444), this protein is Methionine--tRNA ligase.